A 305-amino-acid chain; its full sequence is Protoheme IX farnesyltransferase 1 (305 aa).

9 helical membrane passes run 30–50 (IGIV…AFQF), 59–79 (LDVI…SGAM), 108–128 (FVLT…FAAS), 129–149 (FAAG…YSMW), 154–176 (HVSN…FAAV), 180–202 (LGPG…FYAL), 232–252 (LFWI…GIGF), 253–273 (LTLA…GFTA), and 284–304 (FIYS…FAVF).

Belongs to the UbiA prenyltransferase family. Protoheme IX farnesyltransferase subfamily. As to quaternary structure, interacts with CtaA.

It localises to the cell membrane. It carries out the reaction heme b + (2E,6E)-farnesyl diphosphate + H2O = Fe(II)-heme o + diphosphate. The protein operates within porphyrin-containing compound metabolism; heme O biosynthesis; heme O from protoheme: step 1/1. Converts heme B (protoheme IX) to heme O by substitution of the vinyl group on carbon 2 of heme B porphyrin ring with a hydroxyethyl farnesyl side group. In Lysinibacillus sphaericus (strain C3-41), this protein is Protoheme IX farnesyltransferase 1.